The primary structure comprises 443 residues: Protein king tubby (443 aa).

Disordered regions lie at residues Thr-57–Ile-85 and His-98–Gly-189. Residues Ala-68 to Ile-85 show a composition bias toward polar residues. A compositionally biased stretch (low complexity) spans Gln-113–Gln-128. Position 136 is a phosphoserine (Ser-136). The span at Asn-148–Ala-160 shows a compositional bias: low complexity. Over residues Asn-177–Glu-186 the composition is skewed to gly residues.

This sequence belongs to the TUB family.

Its subcellular location is the cytoplasm. The protein localises to the nucleus. The protein resides in the cell projection. It is found in the cilium membrane. It localises to the rhabdomere. This is Protein king tubby from Drosophila yakuba (Fruit fly).